The chain runs to 700 residues: Methionine--tRNA ligase (700 aa).

The short motif at 16 to 26 (PYANGAFHVGH) is the 'HIGH' region element. Zn(2+)-binding residues include C148, C151, C161, and C164. The short motif at 337–341 (KMSKS) is the 'KMSKS' region element. ATP is bound at residue K340. A tRNA-binding domain is found at 594–700 (DFAKIDLRIA…PGAEPGMRVG (107 aa)).

The protein belongs to the class-I aminoacyl-tRNA synthetase family. MetG type 1 subfamily. Homodimer. Requires Zn(2+) as cofactor.

Its subcellular location is the cytoplasm. It catalyses the reaction tRNA(Met) + L-methionine + ATP = L-methionyl-tRNA(Met) + AMP + diphosphate. Functionally, is required not only for elongation of protein synthesis but also for the initiation of all mRNA translation through initiator tRNA(fMet) aminoacylation. This Janthinobacterium sp. (strain Marseille) (Minibacterium massiliensis) protein is Methionine--tRNA ligase.